The following is a 166-amino-acid chain: MFPMVTEFMNYGQQTVRAARYIGQGFTITLSHANRLPVTIQYPYEKLITSERFRGRIHFEFDKCIACEVCVRVCPIDLPVVDWKLETDIRKKRLLNYSIDFGICIFCGNCVEYCPTNCLSMTEEYELSTYDRHELNYNQIALGRLPMSIIDDYTIRTILNLPETKT.

4Fe-4S ferredoxin-type domains follow at residues 55 to 84 and 95 to 124; these read GRIH…VDWK and LNYS…MTEE. [4Fe-4S] cluster is bound by residues cysteine 64, cysteine 67, cysteine 70, cysteine 74, cysteine 104, cysteine 107, cysteine 110, and cysteine 114.

Belongs to the complex I 23 kDa subunit family. NDH is composed of at least 16 different subunits, 5 of which are encoded in the nucleus. It depends on [4Fe-4S] cluster as a cofactor.

Its subcellular location is the plastid. The protein resides in the chloroplast thylakoid membrane. It catalyses the reaction a plastoquinone + NADH + (n+1) H(+)(in) = a plastoquinol + NAD(+) + n H(+)(out). The catalysed reaction is a plastoquinone + NADPH + (n+1) H(+)(in) = a plastoquinol + NADP(+) + n H(+)(out). Its function is as follows. NDH shuttles electrons from NAD(P)H:plastoquinone, via FMN and iron-sulfur (Fe-S) centers, to quinones in the photosynthetic chain and possibly in a chloroplast respiratory chain. The immediate electron acceptor for the enzyme in this species is believed to be plastoquinone. Couples the redox reaction to proton translocation, and thus conserves the redox energy in a proton gradient. The chain is NAD(P)H-quinone oxidoreductase subunit I, chloroplastic from Acanthospermum australe (Paraguayan starburr).